Consider the following 290-residue polypeptide: Nucleoid occlusion protein (290 aa).

The H-T-H motif DNA-binding region spans 153–172 (EALAQRLGKGQSTIANKLRL).

The protein belongs to the ParB family.

Its subcellular location is the cytoplasm. It localises to the nucleoid. Functionally, effects nucleoid occlusion by binding relatively nonspecifically to DNA and preventing the assembly of the division machinery in the vicinity of the nucleoid, especially under conditions that disturb the cell cycle. It helps to coordinate cell division and chromosome segregation by preventing the formation of the Z ring through the nucleoid, which would cause chromosome breakage. In Bacillus cytotoxicus (strain DSM 22905 / CIP 110041 / 391-98 / NVH 391-98), this protein is Nucleoid occlusion protein.